Here is a 152-residue protein sequence, read N- to C-terminus: Superoxide dismutase [Cu-Zn] (152 aa).

Cu cation contacts are provided by His44, His46, and His61. Zn(2+) contacts are provided by His61, His69, His78, and Asp81. His118 provides a ligand contact to Cu cation.

It belongs to the Cu-Zn superoxide dismutase family. In terms of assembly, homodimer. The cofactor is Cu cation. Requires Zn(2+) as cofactor.

It is found in the cytoplasm. It catalyses the reaction 2 superoxide + 2 H(+) = H2O2 + O2. In terms of biological role, destroys radicals which are normally produced within the cells and which are toxic to biological systems. The sequence is that of Superoxide dismutase [Cu-Zn] from Drosophila pseudoobscura pseudoobscura (Fruit fly).